The sequence spans 484 residues: UDP-N-acetylmuramoyl-L-alanyl-D-glutamate--L-lysine ligase (484 aa).

Residue S43 participates in UDP-N-acetyl-alpha-D-muramoyl-L-alanyl-D-glutamate binding. Residue 119-125 (GTKGKTT) coordinates ATP. UDP-N-acetyl-alpha-D-muramoyl-L-alanyl-D-glutamate contacts are provided by residues 161 to 162 (TT), S188, and R196. At K230 the chain carries N6-carboxylysine. An L-lysine recognition motif motif is present at residues 405-408 (DDPN).

It belongs to the MurCDEF family. MurE subfamily. Carboxylation is probably crucial for Mg(2+) binding and, consequently, for the gamma-phosphate positioning of ATP.

Its subcellular location is the cytoplasm. It carries out the reaction UDP-N-acetyl-alpha-D-muramoyl-L-alanyl-D-glutamate + L-lysine + ATP = UDP-N-acetyl-alpha-D-muramoyl-L-alanyl-gamma-D-glutamyl-L-lysine + ADP + phosphate + H(+). The protein operates within cell wall biogenesis; peptidoglycan biosynthesis. Its function is as follows. Catalyzes the addition of L-lysine to the nucleotide precursor UDP-N-acetylmuramoyl-L-alanyl-D-glutamate (UMAG) in the biosynthesis of bacterial cell-wall peptidoglycan. The protein is UDP-N-acetylmuramoyl-L-alanyl-D-glutamate--L-lysine ligase of Streptococcus agalactiae serotype V (strain ATCC BAA-611 / 2603 V/R).